The chain runs to 220 residues: GTP cyclohydrolase 1 (220 aa).

Zn(2+) contacts are provided by Cys-109, His-112, and Cys-180.

The protein belongs to the GTP cyclohydrolase I family. In terms of assembly, toroid-shaped homodecamer, composed of two pentamers of five dimers.

The enzyme catalyses GTP + H2O = 7,8-dihydroneopterin 3'-triphosphate + formate + H(+). Its pathway is cofactor biosynthesis; 7,8-dihydroneopterin triphosphate biosynthesis; 7,8-dihydroneopterin triphosphate from GTP: step 1/1. This is GTP cyclohydrolase 1 from Yersinia enterocolitica serotype O:8 / biotype 1B (strain NCTC 13174 / 8081).